The primary structure comprises 142 residues: Large ribosomal subunit protein uL11 (142 aa).

Belongs to the universal ribosomal protein uL11 family. As to quaternary structure, part of the ribosomal stalk of the 50S ribosomal subunit. Interacts with L10 and the large rRNA to form the base of the stalk. L10 forms an elongated spine to which L12 dimers bind in a sequential fashion forming a multimeric L10(L12)X complex. One or more lysine residues are methylated.

In terms of biological role, forms part of the ribosomal stalk which helps the ribosome interact with GTP-bound translation factors. This chain is Large ribosomal subunit protein uL11, found in Hydrogenovibrio crunogenus (strain DSM 25203 / XCL-2) (Thiomicrospira crunogena).